We begin with the raw amino-acid sequence, 68 residues long: conotoxin S11.3 (68 aa).

Positions 1–26 (MMFRLTSVSCFLLVIVCLNLFQVVLT) are cleaved as a signal peptide. Cystine bridges form between cysteine 29–cysteine 43, cysteine 36–cysteine 48, cysteine 42–cysteine 52, and cysteine 47–cysteine 56. Tyrosine amide is present on tyrosine 60. Positions 64–68 (ATFQE) are excised as a propeptide.

Belongs to the conotoxin I2 superfamily. As to expression, expressed by the venom duct.

Its subcellular location is the secreted. The polypeptide is conotoxin S11.3 (Conus striatus (Striated cone)).